The primary structure comprises 82 residues: Cytochrome b559 subunit alpha (82 aa).

The helical transmembrane segment at 21-35 (VIHSITVPALFIAGW) threads the bilayer. Histidine 23 provides a ligand contact to heme.

Belongs to the PsbE/PsbF family. In terms of assembly, heterodimer of an alpha subunit and a beta subunit. PSII is composed of 1 copy each of membrane proteins PsbA, PsbB, PsbC, PsbD, PsbE, PsbF, PsbH, PsbI, PsbJ, PsbK, PsbL, PsbM, PsbT, PsbX, PsbY, PsbZ, Psb30/Ycf12, at least 3 peripheral proteins of the oxygen-evolving complex and a large number of cofactors. It forms dimeric complexes. Requires heme b as cofactor.

It localises to the plastid. The protein resides in the chloroplast thylakoid membrane. Its function is as follows. This b-type cytochrome is tightly associated with the reaction center of photosystem II (PSII). PSII is a light-driven water:plastoquinone oxidoreductase that uses light energy to abstract electrons from H(2)O, generating O(2) and a proton gradient subsequently used for ATP formation. It consists of a core antenna complex that captures photons, and an electron transfer chain that converts photonic excitation into a charge separation. This Chlamydomonas reinhardtii (Chlamydomonas smithii) protein is Cytochrome b559 subunit alpha.